A 401-amino-acid chain; its full sequence is MRNIIVKELNQTYIEDIDIEIVERKGIGHPDSISDGIGETVSEALCKMYMDELGGVLHHNTDEVQITAGESNPVFGGGKILKPIDILLTGRGVSEYDGIKFPLDRVAIEAAKNFLDDTIINLDVELDTVVECKIGHGSGDLVDVFKREGAPSSNDTSFGVGYAPFSETETLVKATEELLNSKPFKAKHPAVGEDIKVMGLREGEKITLTIGCAMVSKFVANREEYIAVREELKDIVSDLATKYTNREVEVFVNTADNDDATDESGYYLTVTGTSAEMGDDGSVGRGNRANGLITPCRPMSMEASSGKNPINHVGKIYNILSNEIAKDVVENVEGIKQMNVMILSQIGKPIDQPKAASTQVILEDGVKLEDVDKKVEQIVDRWLEDISIITENVVQGKTRTF.

Position 135–140 (135–140) interacts with ATP; sequence GHGSGD.

Belongs to the AdoMet synthase 2 family. Requires Mg(2+) as cofactor.

It catalyses the reaction L-methionine + ATP + H2O = S-adenosyl-L-methionine + phosphate + diphosphate. The protein operates within amino-acid biosynthesis; S-adenosyl-L-methionine biosynthesis; S-adenosyl-L-methionine from L-methionine: step 1/1. Functionally, catalyzes the formation of S-adenosylmethionine from methionine and ATP. The sequence is that of S-adenosylmethionine synthase from Methanobrevibacter smithii (strain ATCC 35061 / DSM 861 / OCM 144 / PS).